A 325-amino-acid chain; its full sequence is DNA-directed RNA polymerase subunit alpha (325 aa).

The alpha N-terminal domain (alpha-NTD) stretch occupies residues 1-238 (MSPKNLLKGF…DHLTVFINFE (238 aa)). The tract at residues 255–325 (LKAALSKHVE…MGLSFGMRDF (71 aa)) is alpha C-terminal domain (alpha-CTD).

This sequence belongs to the RNA polymerase alpha chain family. As to quaternary structure, homodimer. The RNAP catalytic core consists of 2 alpha, 1 beta, 1 beta' and 1 omega subunit. When a sigma factor is associated with the core the holoenzyme is formed, which can initiate transcription.

It catalyses the reaction RNA(n) + a ribonucleoside 5'-triphosphate = RNA(n+1) + diphosphate. In terms of biological role, DNA-dependent RNA polymerase catalyzes the transcription of DNA into RNA using the four ribonucleoside triphosphates as substrates. This Leptospira biflexa serovar Patoc (strain Patoc 1 / Ames) protein is DNA-directed RNA polymerase subunit alpha.